The chain runs to 326 residues: 4-hydroxythreonine-4-phosphate dehydrogenase (326 aa).

Thr-132 serves as a coordination point for substrate. Residues His-160, His-205, and His-260 each contribute to the a divalent metal cation site. The substrate site is built by Lys-268, Asn-277, and Arg-286.

It belongs to the PdxA family. As to quaternary structure, homodimer. Zn(2+) serves as cofactor. Mg(2+) is required as a cofactor. Requires Co(2+) as cofactor.

It is found in the cytoplasm. It catalyses the reaction 4-(phosphooxy)-L-threonine + NAD(+) = 3-amino-2-oxopropyl phosphate + CO2 + NADH. Its pathway is cofactor biosynthesis; pyridoxine 5'-phosphate biosynthesis; pyridoxine 5'-phosphate from D-erythrose 4-phosphate: step 4/5. Its function is as follows. Catalyzes the NAD(P)-dependent oxidation of 4-(phosphooxy)-L-threonine (HTP) into 2-amino-3-oxo-4-(phosphooxy)butyric acid which spontaneously decarboxylates to form 3-amino-2-oxopropyl phosphate (AHAP). The chain is 4-hydroxythreonine-4-phosphate dehydrogenase from Stenotrophomonas maltophilia (strain R551-3).